Reading from the N-terminus, the 303-residue chain is Mitochondrial basic amino acids transporter (303 aa).

6 helical membrane passes run 2–22 (ALDFLAGCAGGVAGVLVGHPF), 61–81 (GLGSPLMGLTFINALVFGVQG), 96–116 (FLAGAAAGAIQCVICCPMELA), 153–172 (GMVSTLLRETPSFGVYFLTY), 187–207 (LLVPKLLLAGGTSGIVSWLST), and 255–275 (LLRAFPVNAATFATVTVVLTY). 3 Solcar repeats span residues 2–86 (ALDF…TLRA), 90–178 (DSPL…LTRA), and 185–275 (DRLL…VLTY). The tract at residues 282 to 303 (GPEGEAVPAAPAGPALAQPSSL) is disordered. Positions 284–303 (EGEAVPAAPAGPALAQPSSL) are enriched in low complexity.

It belongs to the mitochondrial carrier (TC 2.A.29) family.

Its subcellular location is the mitochondrion inner membrane. It catalyses the reaction L-lysine(out) + L-arginine(in) = L-lysine(in) + L-arginine(out). The enzyme catalyses L-histidine(out) + L-arginine(in) = L-histidine(in) + L-arginine(out). The catalysed reaction is L-ornithine(in) + L-arginine(out) = L-ornithine(out) + L-arginine(in). It carries out the reaction L-homoarginine(in) + L-arginine(out) = L-homoarginine(out) + L-arginine(in). It catalyses the reaction N(omega)-methyl-L-arginine(in) + L-arginine(out) = N(omega)-methyl-L-arginine(out) + L-arginine(in). The enzyme catalyses L-arginine(in) = L-arginine(out). The catalysed reaction is L-lysine(in) = L-lysine(out). It carries out the reaction L-ornithine(in) = L-ornithine(out). It catalyses the reaction L-histidine(out) = L-histidine(in). Its function is as follows. Mitochondrial transporter of arginine, lysine, homoarginine, methylarginine and, to a much lesser extent, ornithine and histidine. Does not transport carnitine nor acylcarnitines. Functions by both counter-exchange and uniport mechanisms. Plays a physiological role in the import of basic amino acids into mitochondria for mitochondrial protein synthesis and amino acid degradation. This Homo sapiens (Human) protein is Mitochondrial basic amino acids transporter.